The chain runs to 101 residues: A-type ATP synthase subunit K (101 aa).

Transmembrane regions (helical) follow at residues 5-25 (WLPF…AQAP), 37-57 (IGAG…VGMA), and 75-95 (ILIF…FAVL).

This sequence belongs to the V-ATPase proteolipid subunit family. Has multiple subunits with at least A(3), B(3), C, D, E, F, H, I and proteolipid K(x). In terms of processing, the N-terminus is blocked.

The protein localises to the cell membrane. Component of the A-type ATP synthase that produces ATP from ADP in the presence of a proton gradient across the membrane. The chain is A-type ATP synthase subunit K from Sulfurisphaera tokodaii (strain DSM 16993 / JCM 10545 / NBRC 100140 / 7) (Sulfolobus tokodaii).